Consider the following 240-residue polypeptide: Cysteine-rich venom protein triflin (240 aa).

The N-terminal stretch at 1–19 is a signal peptide; sequence MIAFIVLPILAAVLQQSSG. One can recognise an SCP domain in the interval 39–166; sequence DLHNSLRRSV…KYSYFYVCQY (128 aa). 8 disulfide bridges follow: cysteine 75-cysteine 153, cysteine 92-cysteine 167, cysteine 148-cysteine 164, cysteine 186-cysteine 193, cysteine 189-cysteine 198, cysteine 202-cysteine 235, cysteine 211-cysteine 229, and cysteine 220-cysteine 233. One can recognise a ShKT domain in the interval 202–235; the sequence is CTRENEFTNCDSLVQKSSCQDNYMKSKCPASCFC.

This sequence belongs to the CRISP family. In terms of assembly, forms a stable, non-covalent complex with SSP-2. In terms of tissue distribution, expressed by the venom gland.

Its subcellular location is the secreted. Functionally, blocks contraction of smooth muscle elicited by high potassium-induced depolarization. May target voltage-gated calcium channels (Cav) on smooth muscle. In Protobothrops flavoviridis (Habu), this protein is Cysteine-rich venom protein triflin.